Here is a 467-residue protein sequence, read N- to C-terminus: Multiple inositol polyphosphate phosphatase 1 (467 aa).

An N-terminal signal peptide occupies residues 1–15; the sequence is MRLLILLLLPLVAIA. H67 is an active-site residue. 3 N-linked (GlcNAc...) asparagine glycosylation sites follow: N120, N159, and N234. G441 is lipidated: GPI-anchor amidated glycine. Residues 442-467 constitute a propeptide, removed in mature form; that stretch reads GAPSLGSGVGGLLATTLAAMLVYLMH.

Belongs to the histidine acid phosphatase family. MINPP1 subfamily. N-glycosylated.

Its subcellular location is the cell membrane. The protein resides in the apical cell membrane. It is found in the basolateral cell membrane. The protein localises to the cell projection. It localises to the filopodium. Its subcellular location is the cell junction. It carries out the reaction (2R)-2,3-bisphosphoglycerate + H2O = (2R)-2-phosphoglycerate + phosphate. It catalyses the reaction 1D-myo-inositol hexakisphosphate + H2O = 1D-myo-inositol 1,2,4,5,6-pentakisphosphate + phosphate. The catalysed reaction is 1D-myo-inositol 1,2,4,5,6-pentakisphosphate + H2O = 1D-myo-inositol 1,2,5,6-tetrakisphosphate + phosphate. The enzyme catalyses 1D-myo-inositol 1,2,5,6-tetrakisphosphate + H2O = 1D-myo-inositol 1,2,6-trisphosphate + phosphate. Probable multiple inositol polyphosphate phosphatase that hydrolyzes 1D-myo-inositol 1,3,4,5,6-pentakisphosphate (InsP5[2OH]) and 1D-myo-inositol hexakisphosphate (InsP6) to a range of less phosphorylated inositol phosphates. This regulates the availability of these various small molecule second messengers and metal chelators which control many aspects of cell physiology. May have a dual substrate specificity, and function as a 2,3-bisphosphoglycerate 3-phosphatase hydrolyzing 2,3-bisphosphoglycerate to 2-phosphoglycerate. 2,3-bisphosphoglycerate (BPG) is formed as part of the Rapoport-Luebering glycolytic bypass. Has a role in embryonic tracheal development where it localizes to the leading edge of actively migrating branches. In these leading cells, enhances formation and/or maintenance of filopodia which may drive branch migration and elongation by cell-cell intercalation. The function in tracheal morphogenesis is dependent on its inositol polyphosphate phosphatase activity. The polypeptide is Multiple inositol polyphosphate phosphatase 1 (Drosophila melanogaster (Fruit fly)).